The primary structure comprises 433 residues: GTPase Obg (433 aa).

The Obg domain maps to 1 to 158; it reads MFVDQVKIYV…RNVILELKLL (158 aa). The OBG-type G domain occupies 159-329; sequence ADVGLVGFPS…LLFAIADLLE (171 aa). Residues 165–172, 190–194, 212–215, 282–285, and 310–312 contribute to the GTP site; these read GFPSVGKS, FTTLV, DLPG, NKMD, and SAA. 2 residues coordinate Mg(2+): Ser172 and Thr192. An OCT domain is found at 350–428; the sequence is KYEKEELPFT…LLDYEFEFVD (79 aa).

This sequence belongs to the TRAFAC class OBG-HflX-like GTPase superfamily. OBG GTPase family. Monomer. Mg(2+) is required as a cofactor.

The protein resides in the cytoplasm. Functionally, an essential GTPase which binds GTP, GDP and possibly (p)ppGpp with moderate affinity, with high nucleotide exchange rates and a fairly low GTP hydrolysis rate. Plays a role in control of the cell cycle, stress response, ribosome biogenesis and in those bacteria that undergo differentiation, in morphogenesis control. The chain is GTPase Obg from Geobacillus thermodenitrificans (strain NG80-2).